Consider the following 445-residue polypeptide: Argininosuccinate synthase (445 aa).

Residues A17–S25 and A43 each bind ATP. Y99 is a binding site for L-citrulline. G129 and T131 together coordinate ATP. T131, N135, and D136 together coordinate L-aspartate. N135 provides a ligand contact to L-citrulline. An ATP-binding site is contributed by D136. L-citrulline contacts are provided by R139 and S192. D194 is an ATP binding site. 3 residues coordinate L-citrulline: T201, E203, and E280.

Belongs to the argininosuccinate synthase family. Type 2 subfamily. In terms of assembly, homotetramer.

The protein localises to the cytoplasm. It catalyses the reaction L-citrulline + L-aspartate + ATP = 2-(N(omega)-L-arginino)succinate + AMP + diphosphate + H(+). Its pathway is amino-acid biosynthesis; L-arginine biosynthesis; L-arginine from L-ornithine and carbamoyl phosphate: step 2/3. In Gemmatimonas aurantiaca (strain DSM 14586 / JCM 11422 / NBRC 100505 / T-27), this protein is Argininosuccinate synthase.